The chain runs to 100 residues: NAD(P)H-quinone oxidoreductase subunit 4L, chloroplastic (100 aa).

The next 3 membrane-spanning stretches (helical) occupy residues methionine 1–isoleucine 21, isoleucine 27–phenylalanine 47, and phenylalanine 61–phenylalanine 81.

This sequence belongs to the complex I subunit 4L family. NDH is composed of at least 16 different subunits, 5 of which are encoded in the nucleus.

It is found in the plastid. The protein resides in the chloroplast thylakoid membrane. The enzyme catalyses a plastoquinone + NADH + (n+1) H(+)(in) = a plastoquinol + NAD(+) + n H(+)(out). The catalysed reaction is a plastoquinone + NADPH + (n+1) H(+)(in) = a plastoquinol + NADP(+) + n H(+)(out). NDH shuttles electrons from NAD(P)H:plastoquinone, via FMN and iron-sulfur (Fe-S) centers, to quinones in the photosynthetic chain and possibly in a chloroplast respiratory chain. The immediate electron acceptor for the enzyme in this species is believed to be plastoquinone. Couples the redox reaction to proton translocation, and thus conserves the redox energy in a proton gradient. This chain is NAD(P)H-quinone oxidoreductase subunit 4L, chloroplastic, found in Chaetosphaeridium globosum (Charophycean green alga).